The following is a 359-amino-acid chain: Guanine nucleotide-binding protein subunit alpha-11 (359 aa).

2 S-palmitoyl cysteine lipidation sites follow: Cys9 and Cys10. The region spanning 38–359 (RELKLLLLGT…QHNLKEYNLV (322 aa)) is the G-alpha domain. Positions 41–54 (KLLLLGTGESGKST) are G1 motif. GTP contacts are provided by residues 46-53 (GTGESGKS) and 180-183 (LRVR). Ser53 contributes to the Mg(2+) binding site. Positions 178–186 (DVLRVRVPT) are G2 motif. Residue Thr186 participates in Mg(2+) binding. Positions 201–210 (FRMVDVGGQR) are G3 motif. Residues 270-277 (ILFLNKKD) are G4 motif. GTP-binding positions include 274-277 (NKKD) and Ala331. The segment at 329 to 334 (TCATDT) is G5 motif.

Belongs to the G-alpha family. G(q) subfamily. G proteins are composed of 3 units; alpha, beta and gamma. The alpha chain contains the guanine nucleotide binding site.

The protein resides in the cell membrane. Its subcellular location is the cytoplasm. It catalyses the reaction GTP + H2O = GDP + phosphate + H(+). Its function is as follows. Guanine nucleotide-binding proteins (G proteins) function as transducers downstream of G protein-coupled receptors (GPCRs) in numerous signaling cascades. The alpha chain contains the guanine nucleotide binding site and alternates between an active, GTP-bound state and an inactive, GDP-bound state. Signaling by an activated GPCR promotes GDP release and GTP binding. The alpha subunit has a low GTPase activity that converts bound GTP to GDP, thereby terminating the signal. Both GDP release and GTP hydrolysis are modulated by numerous regulatory proteins. Signaling is mediated via phospholipase C-beta-dependent inositol lipid hydrolysis for signal propagation: activates phospholipase C-beta: following GPCR activation, GNA11 activates PLC-beta (PLCB1, PLCB2, PLCB3 or PLCB4), leading to production of diacylglycerol (DAG) and inositol 1,4,5-trisphosphate (IP3). This is Guanine nucleotide-binding protein subunit alpha-11 (gna11) from Xenopus laevis (African clawed frog).